Consider the following 450-residue polypeptide: Methylenetetrahydrofolate--tRNA-(uracil-5-)-methyltransferase TrmFO (450 aa).

10-15 contacts FAD; the sequence is GGGLAG.

This sequence belongs to the MnmG family. TrmFO subfamily. FAD serves as cofactor.

The protein localises to the cytoplasm. The enzyme catalyses uridine(54) in tRNA + (6R)-5,10-methylene-5,6,7,8-tetrahydrofolate + NADH + H(+) = 5-methyluridine(54) in tRNA + (6S)-5,6,7,8-tetrahydrofolate + NAD(+). It catalyses the reaction uridine(54) in tRNA + (6R)-5,10-methylene-5,6,7,8-tetrahydrofolate + NADPH + H(+) = 5-methyluridine(54) in tRNA + (6S)-5,6,7,8-tetrahydrofolate + NADP(+). In terms of biological role, catalyzes the folate-dependent formation of 5-methyl-uridine at position 54 (M-5-U54) in all tRNAs. The sequence is that of Methylenetetrahydrofolate--tRNA-(uracil-5-)-methyltransferase TrmFO from Anaeromyxobacter dehalogenans (strain 2CP-C).